A 488-amino-acid polypeptide reads, in one-letter code: Surface lipoprotein assembly modifier 1 (488 aa).

An N-terminal signal peptide occupies residues methionine 1–alanine 31. The N-terminal domain stretch occupies residues glutamate 32 to aspartate 202. TPR repeat units follow at residues methionine 118 to alanine 151 and alanine 171 to tryptophan 204. The tract at residues alanine 203 to phenylalanine 488 is C-terminal probable beta barrel, partially restores export of lipoproteins. Beta stranded transmembrane passes span tryptophan 204–arginine 214, valine 241–serine 252, tryptophan 257–glycine 267, threonine 280–aspartate 291, lysine 294–arginine 304, asparagine 316–tryptophan 325, tryptophan 330–arginine 340, leucine 354–arginine 364, glutamine 368–tyrosine 377, glycine 393–tryptophan 402, leucine 407–lysine 417, leucine 439–arginine 448, isoleucine 455–arginine 464, and asparagine 478–phenylalanine 488.

Belongs to the Slam family. As to quaternary structure, interacts with the C-terminal domain of surface lipoprotein TbpB.

The protein localises to the cell outer membrane. In terms of biological role, required for correct export to the cell surface of some cell outer membrane lipoproteins both in Neisseria and heterologously in E.coli. The polypeptide is Surface lipoprotein assembly modifier 1 (Neisseria meningitidis serogroup B (strain ATCC BAA-335 / MC58)).